The sequence spans 387 residues: MELDRDKKTFAYFWLFGLINNILYVVILSAASDIIGPSLPKSIVLLFDIMPSFLIKLSAPFFVHSIHYDKRIPILILLSMLGIILVSTRSLWLCLPGIVLASLSSGFGEITFLQLTHFFGSKSLTGWSSGTGGAGIVGSFSYLLLTTVFRLNIQLSLLLYAALPLIFLLYYKINDSIVSSQVYQSLDMPIDSSDGPIELLKSNGWVDIVKRLSKLVIPYMIPLSTVYLFEYLINQGVAPTLLFPIDTTPFVKYRDIYVTYGTLYQLGVFISRTWGHKLPVKNLYLFSVLQLINLLITLSQSYYYWTDSISWIMVLIFYEGLIGGSSYVNCFMNILKDVDPNEREFVLGSVSISDSLGTLIAAFLGIILEPSLCKHQIGTGRPWCRME.

A signal peptide spans 1–31; sequence MELDRDKKTFAYFWLFGLINNILYVVILSAA. Helical transmembrane passes span 43–63, 72–92, 93–113, 129–149, 151–171, 225–245, 257–276, 278–298, 308–328, and 347–367; these read IVLL…PFFV, IPIL…RSLW, LCLP…ITFL, SGTG…TTVF, LNIQ…LLYY, TVYL…LFPI, YVTY…TWGH, LPVK…LITL, SISW…SSYV, and LGSV…LGII.

Belongs to the battenin family.

It localises to the vacuole membrane. Functionally, involved in vacuolar transport and vacuole pH homeostasis. Also required for cytokinesis. The chain is Protein BTN1 (BTN1) from Kluyveromyces lactis (strain ATCC 8585 / CBS 2359 / DSM 70799 / NBRC 1267 / NRRL Y-1140 / WM37) (Yeast).